A 131-amino-acid polypeptide reads, in one-letter code: Glycine cleavage system H protein (131 aa).

The Lipoyl-binding domain occupies 24–106 (RVTVGISDHA…YGEGWIFVVE (83 aa)). N6-lipoyllysine is present on K65.

Belongs to the GcvH family. The glycine cleavage system is composed of four proteins: P, T, L and H. It depends on (R)-lipoate as a cofactor.

In terms of biological role, the glycine cleavage system catalyzes the degradation of glycine. The H protein shuttles the methylamine group of glycine from the P protein to the T protein. This Xanthomonas euvesicatoria pv. vesicatoria (strain 85-10) (Xanthomonas campestris pv. vesicatoria) protein is Glycine cleavage system H protein.